A 197-amino-acid chain; its full sequence is Protein GrpE (197 aa).

The tract at residues 1 to 40 (MSSKEQKTPEGQAPEEIIMDQHEEIEAVEPEASAEQVDPR) is disordered.

This sequence belongs to the GrpE family. As to quaternary structure, homodimer.

Its subcellular location is the cytoplasm. In terms of biological role, participates actively in the response to hyperosmotic and heat shock by preventing the aggregation of stress-denatured proteins, in association with DnaK and GrpE. It is the nucleotide exchange factor for DnaK and may function as a thermosensor. Unfolded proteins bind initially to DnaJ; upon interaction with the DnaJ-bound protein, DnaK hydrolyzes its bound ATP, resulting in the formation of a stable complex. GrpE releases ADP from DnaK; ATP binding to DnaK triggers the release of the substrate protein, thus completing the reaction cycle. Several rounds of ATP-dependent interactions between DnaJ, DnaK and GrpE are required for fully efficient folding. This Escherichia coli (strain K12 / DH10B) protein is Protein GrpE.